The sequence spans 512 residues: Bifunctional purine biosynthesis protein PurH (512 aa).

Positions 1–144 (MKRALVSVSD…KNYHDVTIVV (144 aa)) constitute an MGS-like domain.

Belongs to the PurH family.

The catalysed reaction is (6R)-10-formyltetrahydrofolate + 5-amino-1-(5-phospho-beta-D-ribosyl)imidazole-4-carboxamide = 5-formamido-1-(5-phospho-D-ribosyl)imidazole-4-carboxamide + (6S)-5,6,7,8-tetrahydrofolate. It catalyses the reaction IMP + H2O = 5-formamido-1-(5-phospho-D-ribosyl)imidazole-4-carboxamide. It participates in purine metabolism; IMP biosynthesis via de novo pathway; 5-formamido-1-(5-phospho-D-ribosyl)imidazole-4-carboxamide from 5-amino-1-(5-phospho-D-ribosyl)imidazole-4-carboxamide (10-formyl THF route): step 1/1. Its pathway is purine metabolism; IMP biosynthesis via de novo pathway; IMP from 5-formamido-1-(5-phospho-D-ribosyl)imidazole-4-carboxamide: step 1/1. This is Bifunctional purine biosynthesis protein PurH from Limosilactobacillus reuteri (strain DSM 20016) (Lactobacillus reuteri).